The chain runs to 303 residues: Sulfotransferase 6B1 (303 aa).

65-70 serves as a coordination point for 3'-phosphoadenylyl sulfate; it reads KCGSNW. H118 serves as the catalytic Proton acceptor. Residues R140, S148, Y203, 237-242, and 259-261 each bind 3'-phosphoadenylyl sulfate; these read STFQAM and RKG.

It belongs to the sulfotransferase 1 family. In terms of tissue distribution, specifically expressed in kidney and testis.

The protein localises to the cytoplasm. It is found in the cytosol. It carries out the reaction thyroxine + 3'-phosphoadenylyl sulfate = thyroxine sulfate + adenosine 3',5'-bisphosphate + H(+). In terms of biological role, sulfotransferase that utilizes 3'-phospho-5'-adenylyl sulfate (PAPS) as sulfonate donor to catalyze the sulfate conjugation of thyroxine. Involved in the metabolism of thyroxine. The chain is Sulfotransferase 6B1 (SULT6B1) from Homo sapiens (Human).